Here is a 1020-residue protein sequence, read N- to C-terminus: Probable beta-galactosidase B (1020 aa).

The first 22 residues, 1–22, serve as a signal peptide directing secretion; it reads MLISKTVLSGLALGASFVGVSA. The N-linked (GlcNAc...) asparagine glycan is linked to Asn25. A substrate-binding site is contributed by Tyr90. N-linked (GlcNAc...) asparagine glycosylation occurs at Asn111. Positions 135, 136, and 137 each coordinate substrate. The N-linked (GlcNAc...) asparagine glycan is linked to Asn172. Asn195 lines the substrate pocket. Residue Glu196 is the Proton donor of the active site. N-linked (GlcNAc...) asparagine glycans are attached at residues Asn210 and Asn251. A substrate-binding site is contributed by Tyr264. Cys270 and Cys323 are disulfide-bonded. Asn271 carries an N-linked (GlcNAc...) asparagine glycan. Residue Glu307 is the Nucleophile of the active site. Tyr372 contacts substrate. N-linked (GlcNAc...) asparagine glycans are attached at residues Asn410, Asn455, Asn549, Asn596, Asn625, Asn702, Asn747, Asn785, Asn819, Asn880, and Asn919.

It belongs to the glycosyl hydrolase 35 family.

Its subcellular location is the secreted. The catalysed reaction is Hydrolysis of terminal non-reducing beta-D-galactose residues in beta-D-galactosides.. Cleaves beta-linked terminal galactosyl residues from gangliosides, glycoproteins, and glycosaminoglycans. In Aspergillus flavus (strain ATCC 200026 / FGSC A1120 / IAM 13836 / NRRL 3357 / JCM 12722 / SRRC 167), this protein is Probable beta-galactosidase B (lacB).